The chain runs to 361 residues: Protein RecA (361 aa).

An ATP-binding site is contributed by 77-84 (GPESSGKT).

It belongs to the RecA family.

Its subcellular location is the cytoplasm. Its function is as follows. Can catalyze the hydrolysis of ATP in the presence of single-stranded DNA, the ATP-dependent uptake of single-stranded DNA by duplex DNA, and the ATP-dependent hybridization of homologous single-stranded DNAs. It interacts with LexA causing its activation and leading to its autocatalytic cleavage. The polypeptide is Protein RecA (Sinorhizobium medicae (strain WSM419) (Ensifer medicae)).